We begin with the raw amino-acid sequence, 170 residues long: Adenine phosphoribosyltransferase (170 aa).

The protein belongs to the purine/pyrimidine phosphoribosyltransferase family. As to quaternary structure, homodimer.

It localises to the cytoplasm. The enzyme catalyses AMP + diphosphate = 5-phospho-alpha-D-ribose 1-diphosphate + adenine. The protein operates within purine metabolism; AMP biosynthesis via salvage pathway; AMP from adenine: step 1/1. Its function is as follows. Catalyzes a salvage reaction resulting in the formation of AMP, that is energically less costly than de novo synthesis. This Kosmotoga olearia (strain ATCC BAA-1733 / DSM 21960 / TBF 19.5.1) protein is Adenine phosphoribosyltransferase.